The sequence spans 514 residues: Maturase K (514 aa).

It belongs to the intron maturase 2 family. MatK subfamily.

It is found in the plastid. The protein resides in the chloroplast. Functionally, usually encoded in the trnK tRNA gene intron. Probably assists in splicing its own and other chloroplast group II introns. The polypeptide is Maturase K (Zamia integrifolia (Coontie)).